The chain runs to 257 residues: Zinc transporter ZupT (257 aa).

The next 8 membrane-spanning stretches (helical) occupy residues 5–25 (LILT…GVLG), 32–52 (LLAF…LMEM), 61–81 (GMSP…YLGL), 109–129 (AILL…ATFV), 137–157 (LGFG…LAVV), 171–191 (ILWA…AWLI), 195–215 (MISP…MVAL), and 236–256 (GVLC…TAGI). Positions 120 and 123 each coordinate Fe(2+). Zn(2+) contacts are provided by Glu-123 and His-148. Positions 149, 152, and 181 each coordinate Fe(2+). Residue Glu-152 coordinates Zn(2+).

Belongs to the ZIP transporter (TC 2.A.5) family. ZupT subfamily.

It localises to the cell inner membrane. It catalyses the reaction Zn(2+)(in) = Zn(2+)(out). In terms of biological role, mediates zinc uptake. May also transport other divalent cations. The protein is Zinc transporter ZupT of Shigella dysenteriae serotype 1 (strain Sd197).